The chain runs to 301 residues: Protein FdhE homolog (301 aa).

The protein belongs to the FdhE family.

Its subcellular location is the cytoplasm. Functionally, necessary for formate dehydrogenase activity. In Erwinia tasmaniensis (strain DSM 17950 / CFBP 7177 / CIP 109463 / NCPPB 4357 / Et1/99), this protein is Protein FdhE homolog.